Consider the following 328-residue polypeptide: Methionine import ATP-binding protein MetN 1 (328 aa).

The ABC transporter domain occupies Ile-2–Leu-241. Gly-38–Ser-45 contributes to the ATP binding site.

This sequence belongs to the ABC transporter superfamily. Methionine importer (TC 3.A.1.24) family. In terms of assembly, the complex is composed of two ATP-binding proteins (MetN), two transmembrane proteins (MetI) and a solute-binding protein (MetQ).

Its subcellular location is the cell inner membrane. The catalysed reaction is L-methionine(out) + ATP + H2O = L-methionine(in) + ADP + phosphate + H(+). The enzyme catalyses D-methionine(out) + ATP + H2O = D-methionine(in) + ADP + phosphate + H(+). In terms of biological role, part of the ABC transporter complex MetNIQ involved in methionine import. Responsible for energy coupling to the transport system. This chain is Methionine import ATP-binding protein MetN 1, found in Yersinia pestis bv. Antiqua (strain Nepal516).